A 434-amino-acid chain; its full sequence is Gamma-glutamyl phosphate reductase (434 aa).

The protein belongs to the gamma-glutamyl phosphate reductase family.

It is found in the cytoplasm. It catalyses the reaction L-glutamate 5-semialdehyde + phosphate + NADP(+) = L-glutamyl 5-phosphate + NADPH + H(+). The protein operates within amino-acid biosynthesis; L-proline biosynthesis; L-glutamate 5-semialdehyde from L-glutamate: step 2/2. In terms of biological role, catalyzes the NADPH-dependent reduction of L-glutamate 5-phosphate into L-glutamate 5-semialdehyde and phosphate. The product spontaneously undergoes cyclization to form 1-pyrroline-5-carboxylate. In Trichormus variabilis (strain ATCC 29413 / PCC 7937) (Anabaena variabilis), this protein is Gamma-glutamyl phosphate reductase.